Consider the following 503-residue polypeptide: Catalase (503 aa).

The interval 1–26 (MAKDDKRLTGLFGHPVSDRENSMTAG) is disordered. Residues histidine 56 and asparagine 129 contribute to the active site. Tyrosine 339 contributes to the heme binding site.

It belongs to the catalase family. In terms of assembly, homodimer. Heme serves as cofactor.

It carries out the reaction 2 H2O2 = O2 + 2 H2O. In terms of biological role, decomposes hydrogen peroxide into water and oxygen; serves to protect cells from the toxic effects of hydrogen peroxide. The protein is Catalase (katA) of Staphylococcus haemolyticus (strain JCSC1435).